Here is a 194-residue protein sequence, read N- to C-terminus: MEPFVVHKGKVAGLDRANIDTDQIIPKQFLKRIERTGFGQFLFYDWRYLSDGTPNPHFELNRPENEGATILVANENFGCGSSREHAPWALADYGFRAIIAPSFADIFYNNCLKNSLLPIKLPKEDVAYLLKQAERADYELTISLEQQVVFDDEGFTSSFDIDPYRKQLLLKGWDEIDLTFVYEPYIIAYEKKRS.

Belongs to the LeuD family. LeuD type 1 subfamily. As to quaternary structure, heterodimer of LeuC and LeuD.

The catalysed reaction is (2R,3S)-3-isopropylmalate = (2S)-2-isopropylmalate. Its pathway is amino-acid biosynthesis; L-leucine biosynthesis; L-leucine from 3-methyl-2-oxobutanoate: step 2/4. Catalyzes the isomerization between 2-isopropylmalate and 3-isopropylmalate, via the formation of 2-isopropylmaleate. The sequence is that of 3-isopropylmalate dehydratase small subunit from Anoxybacillus flavithermus (strain DSM 21510 / WK1).